A 362-amino-acid chain; its full sequence is Replication-associated protein (362 aa).

The CRESS-DNA virus Rep endonuclease domain maps to 8–116 (RINAKNYFLT…DGDTLEWGEF (109 aa)). Residues 15 to 18 (FLTY) carry the RCR-1 motif. Positions 49, 57, and 59 each coordinate a divalent metal cation. Positions 57–59 (HLH) match the RCR-2 motif. The active-site For DNA cleavage activity is tyrosine 103. The RCR-3 motif lies at 103-106 (YLEK). An a divalent metal cation-binding site is contributed by aspartate 107. Residues 143–153 (KSEALNVLREL) are binding to RBR1. Residues 156-176 (KDYVLQFHNLNSNLDRIFTPP) form an oligomerization region. 221-228 (GESRTGKT) is an ATP binding site. Positions 341–362 (YSGTYQGPTQNSEEEVHPEEEN) are disordered. Residues 352–362 (SEEEVHPEEEN) are compositionally biased toward acidic residues.

Belongs to the geminiviridae Rep protein family. Homooligomer. Interacts with the replication enhancer protein (REn). Interacts with host retinoblastoma-related protein 1 (RBR1), and may thereby induce the transcription of host replicative enzymes even if the cell is not dividing anymore. Interacts with host PCNA. Interacts with host SCE1 protein. Binds to host RAD54 protein to ensure geminiviral replication. Requires Mg(2+) as cofactor. Mn(2+) is required as a cofactor.

The protein localises to the host nucleus. In terms of biological role, essential for the replication of viral ssDNA. The closed circular ssDNA genome is first converted to a superhelical dsDNA. Rep binds a specific region at the genome origin of replication. It introduces an endonucleolytic nick within the conserved sequence 5'-TAATATTAC-3' in the intergenic region of the genome present in all geminiviruses, thereby initiating the rolling circle replication (RCR). Following cleavage, binds covalently to the 5'-phosphate of DNA as a tyrosyl ester. The cleavage gives rise to a free 3'-OH that serves as a primer for the cellular DNA polymerase. The polymerase synthesizes the (+) strand DNA by rolling circle mechanism. After one round of replication, a Rep-catalyzed nucleotidyl transfer reaction releases a circular single-stranded virus genome, thereby terminating the replication. Displays origin-specific DNA cleavage, nucleotidyl transferase, ATPase and helicase activities. In Cynanchum acutum (Little mallow), this protein is Replication-associated protein.